A 178-amino-acid polypeptide reads, in one-letter code: Large ribosomal subunit protein uL6 (178 aa).

Belongs to the universal ribosomal protein uL6 family. Part of the 50S ribosomal subunit.

Functionally, this protein binds to the 23S rRNA, and is important in its secondary structure. It is located near the subunit interface in the base of the L7/L12 stalk, and near the tRNA binding site of the peptidyltransferase center. This is Large ribosomal subunit protein uL6 from Streptococcus pneumoniae serotype 19F (strain G54).